A 377-amino-acid chain; its full sequence is Nitric oxide reductase FlRd-NAD(+) reductase (377 aa).

It belongs to the FAD-dependent oxidoreductase family. The cofactor is FAD.

It is found in the cytoplasm. The catalysed reaction is 2 reduced [nitric oxide reductase rubredoxin domain] + NAD(+) + H(+) = 2 oxidized [nitric oxide reductase rubredoxin domain] + NADH. Its pathway is nitrogen metabolism; nitric oxide reduction. Functionally, one of at least two accessory proteins for anaerobic nitric oxide (NO) reductase. Reduces the rubredoxin moiety of NO reductase. The chain is Nitric oxide reductase FlRd-NAD(+) reductase from Salmonella arizonae (strain ATCC BAA-731 / CDC346-86 / RSK2980).